We begin with the raw amino-acid sequence, 525 residues long: GMP synthase [glutamine-hydrolyzing] (525 aa).

The region spanning K8–N207 is the Glutamine amidotransferase type-1 domain. C85 (nucleophile) is an active-site residue. Active-site residues include H181 and E183. Residues W208 to R400 form the GMPS ATP-PPase domain. Position 235–241 (S235–S241) interacts with ATP.

Homodimer.

The catalysed reaction is XMP + L-glutamine + ATP + H2O = GMP + L-glutamate + AMP + diphosphate + 2 H(+). The protein operates within purine metabolism; GMP biosynthesis; GMP from XMP (L-Gln route): step 1/1. Its function is as follows. Catalyzes the synthesis of GMP from XMP. In Shewanella sp. (strain MR-7), this protein is GMP synthase [glutamine-hydrolyzing].